We begin with the raw amino-acid sequence, 409 residues long: tRNA-specific 2-thiouridylase MnmA (409 aa).

Residues 40-47 (GLSGGVDS) and leucine 66 each bind ATP. The active-site Nucleophile is cysteine 127. Cysteine 127 and cysteine 237 are oxidised to a cystine. Glycine 152 provides a ligand contact to ATP. The interaction with tRNA stretch occupies residues 187-189 (KDQ). Cysteine 237 acts as the Cysteine persulfide intermediate in catalysis. The tract at residues 342–343 (RY) is interaction with tRNA.

It belongs to the MnmA/TRMU family.

The protein resides in the cytoplasm. It catalyses the reaction S-sulfanyl-L-cysteinyl-[protein] + uridine(34) in tRNA + AH2 + ATP = 2-thiouridine(34) in tRNA + L-cysteinyl-[protein] + A + AMP + diphosphate + H(+). In terms of biological role, catalyzes the 2-thiolation of uridine at the wobble position (U34) of tRNA, leading to the formation of s(2)U34. In Prochlorococcus marinus (strain MIT 9313), this protein is tRNA-specific 2-thiouridylase MnmA.